The sequence spans 359 residues: Membrane-bound lytic murein transglycosylase C (359 aa).

The N-terminal stretch at 1–16 is a signal peptide; the sequence is MKKVLALALIAPLLIS. Residue Cys17 is the site of N-palmitoyl cysteine attachment. The S-diacylglycerol cysteine moiety is linked to residue Cys17.

This sequence belongs to the transglycosylase Slt family.

Its subcellular location is the cell outer membrane. The catalysed reaction is Exolytic cleavage of the (1-&gt;4)-beta-glycosidic linkage between N-acetylmuramic acid (MurNAc) and N-acetylglucosamine (GlcNAc) residues in peptidoglycan, from either the reducing or the non-reducing ends of the peptidoglycan chains, with concomitant formation of a 1,6-anhydrobond in the MurNAc residue.. Murein-degrading enzyme. May play a role in recycling of muropeptides during cell elongation and/or cell division. This Edwardsiella ictaluri (strain 93-146) protein is Membrane-bound lytic murein transglycosylase C.